The chain runs to 116 residues: Large ribosomal subunit protein uL18 (116 aa).

It belongs to the universal ribosomal protein uL18 family. Part of the 50S ribosomal subunit; part of the 5S rRNA/L5/L18/L25 subcomplex. Contacts the 5S and 23S rRNAs.

This is one of the proteins that bind and probably mediate the attachment of the 5S RNA into the large ribosomal subunit, where it forms part of the central protuberance. This chain is Large ribosomal subunit protein uL18, found in Pseudomonas putida (strain GB-1).